The chain runs to 153 residues: Interleukin-2 (153 aa).

Positions 1-20 are cleaved as a signal peptide; the sequence is MYKVQLLSCIALTLALLTSS. T23 carries an O-linked (GalNAc...) threonine glycan. A disulfide bond links C78 and C125. N111 carries an N-linked (GlcNAc...) asparagine glycan.

It belongs to the IL-2 family.

The protein localises to the secreted. Functionally, cytokine produced by activated CD4-positive helper T-cells and to a lesser extend activated CD8-positive T-cells and natural killer (NK) cells that plays pivotal roles in the immune response and tolerance. Binds to a receptor complex composed of either the high-affinity trimeric IL-2R (IL2RA/CD25, IL2RB/CD122 and IL2RG/CD132) or the low-affinity dimeric IL-2R (IL2RB and IL2RG). Interaction with the receptor leads to oligomerization and conformation changes in the IL-2R subunits resulting in downstream signaling starting with phosphorylation of JAK1 and JAK3. In turn, JAK1 and JAK3 phosphorylate the receptor to form a docking site leading to the phosphorylation of several substrates including STAT5. This process leads to activation of several pathways including STAT, phosphoinositide-3-kinase/PI3K and mitogen-activated protein kinase/MAPK pathways. Functions as a T-cell growth factor and can increase NK-cell cytolytic activity as well. Promotes strong proliferation of activated B-cells and subsequently immunoglobulin production. Plays a pivotal role in regulating the adaptive immune system by controlling the survival and proliferation of regulatory T-cells, which are required for the maintenance of immune tolerance. Moreover, participates in the differentiation and homeostasis of effector T-cell subsets, including Th1, Th2, Th17 as well as memory CD8-positive T-cells. The sequence is that of Interleukin-2 (IL2) from Oryctolagus cuniculus (Rabbit).